Consider the following 183-residue polypeptide: Translocon-associated protein subunit beta (183 aa).

The N-terminal stretch at 1–17 (MRLLASVLLALFAVSHA) is a signal peptide. Residues 18 to 149 (EEGARLLASK…DRRFSPHFLD (132 aa)) are Lumenal-facing. Asparagine 88 and asparagine 104 each carry an N-linked (GlcNAc...) asparagine glycan. The chain crosses the membrane as a helical span at residues 150–169 (WAAFGVMTLPSIGIPLLLWY). The Cytoplasmic portion of the chain corresponds to 170 to 183 (SSKRKYDTPKSKKN).

The protein belongs to the TRAP-beta family. Heterotetramer of TRAP-alpha, TRAP-beta, TRAP-delta and TRAP-gamma. Interacts with STING1.

Its subcellular location is the endoplasmic reticulum membrane. TRAP proteins are part of a complex whose function is to bind calcium to the ER membrane and thereby regulate the retention of ER resident proteins. The chain is Translocon-associated protein subunit beta (SSR2) from Canis lupus familiaris (Dog).